The chain runs to 425 residues: Glutamyl-tRNA reductase (425 aa).

Substrate contacts are provided by residues 49–52, Ser107, 112–114, and Gln118; these read TCNR and EPQ. Cys50 functions as the Nucleophile in the catalytic mechanism. 187–192 is an NADP(+) binding site; sequence GAGETI.

The protein belongs to the glutamyl-tRNA reductase family. Homodimer.

The catalysed reaction is (S)-4-amino-5-oxopentanoate + tRNA(Glu) + NADP(+) = L-glutamyl-tRNA(Glu) + NADPH + H(+). Its pathway is porphyrin-containing compound metabolism; protoporphyrin-IX biosynthesis; 5-aminolevulinate from L-glutamyl-tRNA(Glu): step 1/2. Functionally, catalyzes the NADPH-dependent reduction of glutamyl-tRNA(Glu) to glutamate 1-semialdehyde (GSA). The chain is Glutamyl-tRNA reductase from Pseudomonas syringae pv. tomato (strain ATCC BAA-871 / DC3000).